The sequence spans 122 residues: uncharacterized protein (122 aa).

This is an uncharacterized protein from Carica papaya (Papaya).